We begin with the raw amino-acid sequence, 86 residues long: Large ribosomal subunit protein bL31B (86 aa).

It belongs to the bacterial ribosomal protein bL31 family. Type B subfamily. In terms of assembly, part of the 50S ribosomal subunit.

The protein is Large ribosomal subunit protein bL31B of Salmonella agona (strain SL483).